The sequence spans 220 residues: Ribosomal RNA large subunit methyltransferase E (220 aa).

Residues 1-10 are compositionally biased toward basic and acidic residues; that stretch reads MSRSGKDPGK. The disordered stretch occupies residues 1-24; sequence MSRSGKDPGKRVKTARKRSASSTR. S-adenosyl-L-methionine-binding residues include Gly-75, Trp-77, Asp-94, Asp-110, and Asp-134. Lys-174 serves as the catalytic Proton acceptor.

This sequence belongs to the class I-like SAM-binding methyltransferase superfamily. RNA methyltransferase RlmE family.

Its subcellular location is the cytoplasm. The enzyme catalyses uridine(2552) in 23S rRNA + S-adenosyl-L-methionine = 2'-O-methyluridine(2552) in 23S rRNA + S-adenosyl-L-homocysteine + H(+). In terms of biological role, specifically methylates the uridine in position 2552 of 23S rRNA at the 2'-O position of the ribose in the fully assembled 50S ribosomal subunit. The polypeptide is Ribosomal RNA large subunit methyltransferase E (Erythrobacter litoralis (strain HTCC2594)).